Reading from the N-terminus, the 675-residue chain is Nexilin (675 aa).

A disordered region spans residues 1 to 66; it reads MNDISQKAEI…RKEQYIRERE (66 aa). K16 bears the Phosphoserine mark. Residues 27–66 are compositionally biased toward basic and acidic residues; sequence GKGDVKDKFEAMQRAREERNQRRSRDEKQRRKEQYIRERE. S80 is subject to Phosphoserine. Residues 105–127 are disordered; that stretch reads RFAEMEKQRQEEQRKRTEEERKR. A Phosphoserine modification is found at S241. Disordered stretches follow at residues 254-278 and 313-336; these read LERQ…EEEK and SFEE…ARRR. Phosphoserine is present on residues S357 and S365. T370 carries the phosphothreonine modification. Disordered stretches follow at residues 487-513 and 551-584; these read ENFH…KVNM and LQKK…APWF. 2 positions are modified to phosphoserine: S564 and S569. The Ig-like domain maps to 582 to 670; sequence PWFKKPLKNT…GSAASTCILT (89 aa).

Interacts with F-actin. As to expression, abundantly expressed in heart and skeletal muscle, and at lower levels in placenta, lung, liver and pancreas. Also expressed in HeLaS3 and MOLT-4 cell lines.

Its subcellular location is the cytoplasm. The protein resides in the cytoskeleton. The protein localises to the cell junction. It is found in the adherens junction. It localises to the myofibril. Its subcellular location is the sarcomere. The protein resides in the z line. Its function is as follows. Involved in regulating cell migration through association with the actin cytoskeleton. Has an essential role in the maintenance of Z line and sarcomere integrity. The polypeptide is Nexilin (Homo sapiens (Human)).